The chain runs to 169 residues: Ubiquitin-conjugating enzyme E2 2 (169 aa).

In terms of domain architecture, UBC core spans 4 to 150; sequence AAKRRLIRDF…VKKTVELSWV (147 aa). C88 acts as the Glycyl thioester intermediate in catalysis.

This sequence belongs to the ubiquitin-conjugating enzyme family.

It is found in the cytoplasm. The protein resides in the nucleus. It carries out the reaction S-ubiquitinyl-[E1 ubiquitin-activating enzyme]-L-cysteine + [E2 ubiquitin-conjugating enzyme]-L-cysteine = [E1 ubiquitin-activating enzyme]-L-cysteine + S-ubiquitinyl-[E2 ubiquitin-conjugating enzyme]-L-cysteine.. It participates in protein modification; protein ubiquitination. In terms of biological role, catalyzes the covalent attachment of ubiquitin to other proteins. Plays a role in transcription regulation by catalyzing the monoubiquitination of histone H2B to form H2BK123ub1. H2BK123ub1 gives a specific tag for epigenetic transcriptional activation and is also a prerequisite for H3K4me and H3K79me formation. Also involved in postreplication repair of UV-damaged DNA, in N-end rule-dependent protein degradation and in sporulation. In Cryptococcus neoformans var. neoformans serotype D (strain B-3501A) (Filobasidiella neoformans), this protein is Ubiquitin-conjugating enzyme E2 2 (UBC2).